Consider the following 259-residue polypeptide: UPF0246 protein PSPA7_1607 (259 aa).

It belongs to the UPF0246 family.

The chain is UPF0246 protein PSPA7_1607 from Pseudomonas paraeruginosa (strain DSM 24068 / PA7) (Pseudomonas aeruginosa (strain PA7)).